Reading from the N-terminus, the 504-residue chain is Activin receptor type-1 (504 aa).

A signal peptide spans Met1–Ser16. Residues Val17–Leu119 lie on the Extracellular side of the membrane. Asn94 is a glycosylation site (N-linked (GlcNAc...) asparagine). Residues Ile120–Ile140 traverse the membrane as a helical segment. Topologically, residues Ile141 to Cys504 are cytoplasmic. One can recognise a GS domain in the interval Ser173–Gln202. The Protein kinase domain maps to Ile203 to Leu497. ATP-binding positions include Val209 to Val217 and Lys230. Asp331 serves as the catalytic Proton acceptor.

The protein belongs to the protein kinase superfamily. TKL Ser/Thr protein kinase family. TGFB receptor subfamily. It depends on Mg(2+) as a cofactor. The cofactor is Mn(2+).

The protein resides in the membrane. The enzyme catalyses L-threonyl-[receptor-protein] + ATP = O-phospho-L-threonyl-[receptor-protein] + ADP + H(+). It catalyses the reaction L-seryl-[receptor-protein] + ATP = O-phospho-L-seryl-[receptor-protein] + ADP + H(+). On ligand binding, forms a receptor complex consisting of two type II and two type I transmembrane serine/threonine kinases. Type II receptors phosphorylate and activate type I receptors which autophosphorylate, then bind and activate SMAD transcriptional regulators. Receptor for activin. This is Activin receptor type-1 (ACVR1) from Gallus gallus (Chicken).